Consider the following 439-residue polypeptide: Phosphoribosylamine--glycine ligase (439 aa).

Positions arginine 109–aspartate 317 constitute an ATP-grasp domain. An ATP-binding site is contributed by isoleucine 136 to threonine 195. Mg(2+) is bound by residues glutamine 275, glutamate 287, and asparagine 289. Mn(2+) is bound by residues glutamine 275, glutamate 287, and asparagine 289.

This sequence belongs to the GARS family. The cofactor is Mg(2+). It depends on Mn(2+) as a cofactor.

The enzyme catalyses 5-phospho-beta-D-ribosylamine + glycine + ATP = N(1)-(5-phospho-beta-D-ribosyl)glycinamide + ADP + phosphate + H(+). The protein operates within purine metabolism; IMP biosynthesis via de novo pathway; N(1)-(5-phospho-D-ribosyl)glycinamide from 5-phospho-alpha-D-ribose 1-diphosphate: step 2/2. The sequence is that of Phosphoribosylamine--glycine ligase from Pyrococcus furiosus (strain ATCC 43587 / DSM 3638 / JCM 8422 / Vc1).